The sequence spans 473 residues: MINFETVIGIEIHIELKTKTKMFSPVEINFNAESNTKANQIDLGYPGTLPQVNKKAVKYAIMLAKALNMQIDSNLRFDRKHYFYPDLPKGYQITQFYHPIGREGQIKLNNNGKEFEVNIERIHLEEDTARQHHKDNYSQLDYNRAGIPLIEIVTHPVLRSSDEACLYVDAIRKVVQTLEISEGRLEIGSLRADINISIRPLGSKSFSNKVEIKNLNSLKNIKLAIEEEIALQRAKFFANEEVLQQTKKIDEKTLKLQVLRTKTSTIDYRYFPEPNIPFIKLSKKFISSVKLKELPWEKEARYKSYNLNSIYLNSLLDDIHLANYFDSISYPDKDKLSKIFFAEVVSLANSKEMKAYHLNIDPENITKAINLLDEEVISGKSLKKLIPLLVNFKSDIKKLVKQNSLEQISDPNLISNIIKEIIKTNSELVKEYPTRQEKVLKFVLGKLMKDTGGQVNPTVANEIAIKSLDEVFK.

It belongs to the GatB/GatE family. GatB subfamily. As to quaternary structure, heterotrimer of A, B and C subunits.

It catalyses the reaction L-glutamyl-tRNA(Gln) + L-glutamine + ATP + H2O = L-glutaminyl-tRNA(Gln) + L-glutamate + ADP + phosphate + H(+). It carries out the reaction L-aspartyl-tRNA(Asn) + L-glutamine + ATP + H2O = L-asparaginyl-tRNA(Asn) + L-glutamate + ADP + phosphate + 2 H(+). Its function is as follows. Allows the formation of correctly charged Asn-tRNA(Asn) or Gln-tRNA(Gln) through the transamidation of misacylated Asp-tRNA(Asn) or Glu-tRNA(Gln) in organisms which lack either or both of asparaginyl-tRNA or glutaminyl-tRNA synthetases. The reaction takes place in the presence of glutamine and ATP through an activated phospho-Asp-tRNA(Asn) or phospho-Glu-tRNA(Gln). This chain is Aspartyl/glutamyl-tRNA(Asn/Gln) amidotransferase subunit B, found in Mycoplasmopsis synoviae (strain 53) (Mycoplasma synoviae).